Here is an 890-residue protein sequence, read N- to C-terminus: Serine/threonine-protein kinase D3 (890 aa).

Ser6, Ser27, Ser37, Ser41, and Ser44 each carry phosphoserine. Residues 154-204 form a Phorbol-ester/DAG-type 1 zinc finger; the sequence is PHTLYVHSYKAPTFCDYCGEMLWGLVRQGLKCEGCGLNYHKRCAFKIPNNC. Phosphoserine occurs at positions 213 and 216. The Phorbol-ester/DAG-type 2 zinc finger occupies 271–321; sequence PHTFAVHSYTRPTICQYCKRLLKGLFRQGMQCKDCKFNCHKRCASKVPRDC. The interval 332-371 is disordered; sequence SSLGTDTDIPMDIDNNDINSDSSRGLDDTEEPSPPEDKMF. Phosphoserine occurs at positions 364, 391, and 395. The PH domain maps to 416–532; the sequence is TMVKEGWMVH…WEKAIRQALM (117 aa). Tyr426 is modified (phosphotyrosine). At Ser442 the chain carries Phosphoserine. Phosphotyrosine is present on Tyr457. Thr535 carries the post-translational modification Phosphothreonine. Phosphoserine is present on Ser539. The region spanning 576 to 832 is the Protein kinase domain; sequence IFADEVLGSG…VDKSLSHPWL (257 aa). Residues 582–590 and Lys605 each bind ATP; that span reads LGSGQFGIV. The active-site Proton acceptor is Asp699. A Phosphoserine; by PKC modification is found at Ser731. At Ser735 the chain carries Phosphoserine; by autocatalysis. Tyr742 carries the phosphotyrosine modification.

Belongs to the protein kinase superfamily. CAMK Ser/Thr protein kinase family. PKD subfamily. Mg(2+) serves as cofactor. Ubiquitous.

It is found in the cytoplasm. It localises to the membrane. It catalyses the reaction L-seryl-[protein] + ATP = O-phospho-L-seryl-[protein] + ADP + H(+). The enzyme catalyses L-threonyl-[protein] + ATP = O-phospho-L-threonyl-[protein] + ADP + H(+). With respect to regulation, activated by DAG and phorbol esters. Phorbol-ester/DAG-type domains 1 and 2 bind both DAG and phorbol ester with high affinity and mediate translocation to the cell membrane. Autophosphorylation of Ser-735 and phosphorylation of Ser-731 by PKC relieves auto-inhibition by the PH domain. In terms of biological role, converts transient diacylglycerol (DAG) signals into prolonged physiological effects, downstream of PKC. Involved in resistance to oxidative stress. In Homo sapiens (Human), this protein is Serine/threonine-protein kinase D3 (PRKD3).